The primary structure comprises 264 residues: Low molecular mass lipoprotein PBMHP-12 (264 aa).

An N-terminal signal peptide occupies residues 1 to 16 (MKLLVVFAMCVPAASA).

This sequence belongs to the 30 kDa lipoprotein family.

It localises to the secreted. This Bombyx mori (Silk moth) protein is Low molecular mass lipoprotein PBMHP-12.